Reading from the N-terminus, the 928-residue chain is Outer membrane protein SlpA (928 aa).

A signal peptide spans 1–23; sequence MKKRLVTLLAGLLTVLSMGFGLA. Positions 24–84 constitute an SLH domain; sequence QFSDVPAGHW…QQIEEELKTQ (61 aa).

In terms of assembly, homotrimer.

It localises to the cell outer membrane. Plays an important role in the structural organization and integrity of the cell envelope, bridging the outer membrane to the peptidoglyan layer. Appears to be a nonselective channel. This is Outer membrane protein SlpA (slpA) from Thermus thermophilus (strain ATCC 27634 / DSM 579 / HB8).